The primary structure comprises 326 residues: Malate dehydrogenase (326 aa).

11-17 contributes to the NAD(+) binding site; it reads GAAGQIG. Positions 92 and 98 each coordinate substrate. Residues N105, Q112, and 129–131 each bind NAD(+); that span reads VGN. Residues N131 and R162 each coordinate substrate. H187 serves as the catalytic Proton acceptor.

The protein belongs to the LDH/MDH superfamily. MDH type 2 family.

The enzyme catalyses (S)-malate + NAD(+) = oxaloacetate + NADH + H(+). Its function is as follows. Catalyzes the reversible oxidation of malate to oxaloacetate. The polypeptide is Malate dehydrogenase (Chromobacterium violaceum (strain ATCC 12472 / DSM 30191 / JCM 1249 / CCUG 213 / NBRC 12614 / NCIMB 9131 / NCTC 9757 / MK)).